A 396-amino-acid chain; its full sequence is Flavohemoprotein (396 aa).

The Globin domain occupies methionine 1–alanine 136. Histidine 85 contributes to the heme b binding site. Catalysis depends on charge relay system residues tyrosine 95 and glutamate 135. A reductase region spans residues glycine 147–leucine 396. The FAD-binding FR-type domain occupies glutamate 150–alanine 255. FAD contacts are provided by residues tyrosine 188 and arginine 204–serine 207. Glycine 268 to proline 273 is an NADP(+) binding site. FAD is bound at residue cysteine 389–proline 392.

The protein belongs to the globin family. Two-domain flavohemoproteins subfamily. In the C-terminal section; belongs to the flavoprotein pyridine nucleotide cytochrome reductase family. Heme b serves as cofactor. It depends on FAD as a cofactor.

The catalysed reaction is 2 nitric oxide + NADPH + 2 O2 = 2 nitrate + NADP(+) + H(+). It carries out the reaction 2 nitric oxide + NADH + 2 O2 = 2 nitrate + NAD(+) + H(+). In terms of biological role, is involved in NO detoxification in an aerobic process, termed nitric oxide dioxygenase (NOD) reaction that utilizes O(2) and NAD(P)H to convert NO to nitrate, which protects the bacterium from various noxious nitrogen compounds. Therefore, plays a central role in the inducible response to nitrosative stress. This chain is Flavohemoprotein, found in Escherichia coli O6:H1 (strain CFT073 / ATCC 700928 / UPEC).